A 205-amino-acid polypeptide reads, in one-letter code: N-(5'-phosphoribosyl)anthranilate isomerase (205 aa).

This sequence belongs to the TrpF family.

It catalyses the reaction N-(5-phospho-beta-D-ribosyl)anthranilate = 1-(2-carboxyphenylamino)-1-deoxy-D-ribulose 5-phosphate. Its pathway is amino-acid biosynthesis; L-tryptophan biosynthesis; L-tryptophan from chorismate: step 3/5. The sequence is that of N-(5'-phosphoribosyl)anthranilate isomerase from Clostridium acetobutylicum (strain ATCC 824 / DSM 792 / JCM 1419 / IAM 19013 / LMG 5710 / NBRC 13948 / NRRL B-527 / VKM B-1787 / 2291 / W).